The sequence spans 238 residues: Triosephosphate isomerase (238 aa).

Residue 7 to 9 (NFK) participates in substrate binding. His-91 acts as the Electrophile in catalysis. Catalysis depends on Glu-158, which acts as the Proton acceptor. Gly-164 and Ser-200 together coordinate substrate.

Belongs to the triosephosphate isomerase family. As to quaternary structure, homodimer.

It is found in the cytoplasm. It catalyses the reaction D-glyceraldehyde 3-phosphate = dihydroxyacetone phosphate. Its pathway is carbohydrate biosynthesis; gluconeogenesis. It participates in carbohydrate degradation; glycolysis; D-glyceraldehyde 3-phosphate from glycerone phosphate: step 1/1. In terms of biological role, involved in the gluconeogenesis. Catalyzes stereospecifically the conversion of dihydroxyacetone phosphate (DHAP) to D-glyceraldehyde-3-phosphate (G3P). This Ureaplasma parvum serovar 3 (strain ATCC 27815 / 27 / NCTC 11736) protein is Triosephosphate isomerase.